We begin with the raw amino-acid sequence, 243 residues long: Octanoyltransferase (243 aa).

The 179-residue stretch at 49 to 227 folds into the BPL/LPL catalytic domain; sequence PLAPQAVWLL…SLSDRFGLVW (179 aa). Residues 91–98, 158–160, and 171–173 each bind substrate; these read RGGEVTHH, AIG, and GLA. Cys-189 functions as the Acyl-thioester intermediate in the catalytic mechanism.

It belongs to the LipB family.

The protein localises to the cytoplasm. It catalyses the reaction octanoyl-[ACP] + L-lysyl-[protein] = N(6)-octanoyl-L-lysyl-[protein] + holo-[ACP] + H(+). The protein operates within protein modification; protein lipoylation via endogenous pathway; protein N(6)-(lipoyl)lysine from octanoyl-[acyl-carrier-protein]: step 1/2. Catalyzes the transfer of endogenously produced octanoic acid from octanoyl-acyl-carrier-protein onto the lipoyl domains of lipoate-dependent enzymes. Lipoyl-ACP can also act as a substrate although octanoyl-ACP is likely to be the physiological substrate. The polypeptide is Octanoyltransferase (Prochlorococcus marinus (strain MIT 9313)).